The following is a 126-amino-acid chain: C-type natriuretic peptide (126 aa).

The signal sequence occupies residues 1–23 (MHLSQLIACALLLALLSLRPSEA). The tract at residues 19–71 (RPSEAKPGTPPKVPRTPPGEELAEPQAAGGNQKKGDKTPGGGGANLKGDRSRL) is disordered. Positions 24 to 73 (KPGTPPKVPRTPPGEELAEPQAAGGNQKKGDKTPGGGGANLKGDRSRLLR) are excised as a propeptide. The span at 26–35 (GTPPKVPRTP) shows a compositional bias: pro residues. The cysteines at positions 110 and 126 are disulfide-linked.

It belongs to the natriuretic peptide family. Post-translationally, degraded by IDE (in vitro). In terms of tissue distribution, expressed exclusively in brain.

Its subcellular location is the secreted. Its function is as follows. Hormone which plays a role in endochondral ossification through regulation of cartilaginous growth plate chondrocytes proliferation and differentiation. May also be vasoactive and natriuretic. Acts by specifically binding and stimulating NPR2 to produce cGMP. Binds the clearance receptor NPR3. This chain is C-type natriuretic peptide (Nppc), found in Rattus norvegicus (Rat).